A 299-amino-acid polypeptide reads, in one-letter code: Pectin lyase (299 aa).

A signal peptide spans M1–A18. 2 stretches are compositionally biased toward low complexity: residues R82–D91 and S232–T246. Disordered stretches follow at residues R82–S105 and S227–T246.

This sequence belongs to the polysaccharide lyase 1 family.

The protein localises to the secreted. It carries out the reaction Eliminative cleavage of (1-&gt;4)-alpha-D-galacturonan methyl ester to give oligosaccharides with 4-deoxy-6-O-methyl-alpha-D-galact-4-enuronosyl groups at their non-reducing ends.. The protein is Pectin lyase (PELA) of Peyronellaea pinodes (Pea foot rot fungus).